The following is a 638-amino-acid chain: Terrein cluster-specific transcription factor terR (638 aa).

Positions 50-76 (CDMCKSKKVRCDGGTPCSYCNLHDLRC) form a DNA-binding region, zn(2)-C6 fungal-type.

It localises to the nucleus. Its function is as follows. Transcription factor that regulates specifically the terrein biosynthesis gene cluster. Recognizes CGG direct repeat consensus sequences in the terrein cluster forming the high affinity consensus motif TCGGHHWYHCGGH. The sequence is that of Terrein cluster-specific transcription factor terR from Aspergillus terreus (strain NIH 2624 / FGSC A1156).